The sequence spans 446 residues: White-opaque regulator 2 (446 aa).

Over residues Met1 to Thr24 the composition is skewed to polar residues. A disordered region spans residues Met1 to Phe203. Low complexity predominate over residues Thr30–Ser64. Positions Thr67–Ala86 are enriched in polar residues. Low complexity-rich tracts occupy residues Ser87–Pro97 and Ser104–Ser120. The segment covering Asn121–Val144 has biased composition (polar residues). Over residues Val166–Gln184 the composition is skewed to pro residues. The segment covering Gln185–Pro195 has biased composition (low complexity). A DNA-binding region (zn(2)-C6 fungal-type) is located at residues Cys305–Cys332. Residues Gln336–Leu402 are disordered. Residues Asn358–Gln369 are compositionally biased toward low complexity. Over residues His387–Asn401 the composition is skewed to polar residues.

Its subcellular location is the nucleus. Its function is as follows. Transcriptional regulator of the switch between 2 heritable states, the white and opaque states. These 2 cell types differ in many characteristics, including cell structure, mating competence, and virulence. Each state is heritable for many generations, and switching between states occurs stochastically, at low frequency. WOR2 is necessary for the stability of the opaque state phenotypic switching from the white to the opaque phase is a necessary step for mating. Plays a role in cell adhesion and pseudohyphal growth. In Candida albicans (strain SC5314 / ATCC MYA-2876) (Yeast), this protein is White-opaque regulator 2 (WOR2).